The chain runs to 262 residues: Type III pantothenate kinase (262 aa).

6–13 serves as a coordination point for ATP; sequence DVGNTNAV. Residues Tyr-100 and 107-110 contribute to the substrate site; that span reads GADR. Asp-109 functions as the Proton acceptor in the catalytic mechanism. K(+) is bound at residue Asp-129. An ATP-binding site is contributed by Thr-132. Thr-184 provides a ligand contact to substrate.

It belongs to the type III pantothenate kinase family. Homodimer. It depends on NH4(+) as a cofactor. K(+) is required as a cofactor.

It localises to the cytoplasm. It catalyses the reaction (R)-pantothenate + ATP = (R)-4'-phosphopantothenate + ADP + H(+). The protein operates within cofactor biosynthesis; coenzyme A biosynthesis; CoA from (R)-pantothenate: step 1/5. In terms of biological role, catalyzes the phosphorylation of pantothenate (Pan), the first step in CoA biosynthesis. The polypeptide is Type III pantothenate kinase (Bacillus cytotoxicus (strain DSM 22905 / CIP 110041 / 391-98 / NVH 391-98)).